The sequence spans 495 residues: Phytochrome A type 5 (495 aa).

Over residues 1–21 (MSSSRPASSSSSRNRQSSQAR) the composition is skewed to low complexity. The segment at 1–24 (MSSSRPASSSSSRNRQSSQARVLA) is disordered. A GAF domain is found at 217 to 402 (SMEMLCNTVV…VFAVHVNREF (186 aa)). A phytochromobilin-binding site is contributed by Cys322.

This sequence belongs to the phytochrome family. In terms of assembly, homodimer. In terms of processing, contains one covalently linked phytochromobilin chromophore.

Its function is as follows. Regulatory photoreceptor which exists in two forms that are reversibly interconvertible by light: the Pr form that absorbs maximally in the red region of the spectrum and the Pfr form that absorbs maximally in the far-red region. Photoconversion of Pr to Pfr induces an array of morphogenic responses, whereas reconversion of Pfr to Pr cancels the induction of those responses. Pfr controls the expression of a number of nuclear genes including those encoding the small subunit of ribulose-bisphosphate carboxylase, chlorophyll A/B binding protein, protochlorophyllide reductase, rRNA, etc. It also controls the expression of its own gene(s) in a negative feedback fashion. This chain is Phytochrome A type 5 (PHYA5), found in Avena sativa (Oat).